A 308-amino-acid chain; its full sequence is tRNA dimethylallyltransferase (308 aa).

Glycine 8–threonine 15 is a binding site for ATP. Residue threonine 10–threonine 15 participates in substrate binding. Residues aspartate 33–glutamine 36 form an interaction with substrate tRNA region.

Belongs to the IPP transferase family. As to quaternary structure, monomer. The cofactor is Mg(2+).

It carries out the reaction adenosine(37) in tRNA + dimethylallyl diphosphate = N(6)-dimethylallyladenosine(37) in tRNA + diphosphate. Its function is as follows. Catalyzes the transfer of a dimethylallyl group onto the adenine at position 37 in tRNAs that read codons beginning with uridine, leading to the formation of N6-(dimethylallyl)adenosine (i(6)A). The sequence is that of tRNA dimethylallyltransferase from Kosmotoga olearia (strain ATCC BAA-1733 / DSM 21960 / TBF 19.5.1).